A 102-amino-acid polypeptide reads, in one-letter code: Small ribosomal subunit protein uS10 (102 aa).

Belongs to the universal ribosomal protein uS10 family. Part of the 30S ribosomal subunit.

Its function is as follows. Involved in the binding of tRNA to the ribosomes. In Mycoplasma mobile (strain ATCC 43663 / 163K / NCTC 11711) (Mesomycoplasma mobile), this protein is Small ribosomal subunit protein uS10.